The following is a 343-amino-acid chain: Putative ALA-interacting subunit 2 (343 aa).

Residues 43-63 traverse the membrane as a helical segment; it reads PISVITVFMLMGFVFIPIGLI. 4 N-linked (GlcNAc...) asparagine glycosylation sites follow: N103, N178, N191, and N218. The chain crosses the membrane as a helical span at residues 301-321; it reads FLGITYLVVGSSSIVISIIFM.

The protein belongs to the CDC50/LEM3 family. Expressed in roots, leaves, stems, flowers and siliques.

Its subcellular location is the membrane. This chain is Putative ALA-interacting subunit 2 (ALIS2), found in Arabidopsis thaliana (Mouse-ear cress).